Here is a 257-residue protein sequence, read N- to C-terminus: Uracil phosphoribosyltransferase (257 aa).

5-phospho-alpha-D-ribose 1-diphosphate contacts are provided by residues Arg77, Arg102, and 129 to 137; that span reads DPMLATGGS. Uracil is bound by residues Ile192 and 197-199; that span reads GDA. Asp198 contributes to the 5-phospho-alpha-D-ribose 1-diphosphate binding site. The tract at residues 203-257 is disordered; the sequence is QFGPNLFTSSAPSRPEAPAGRGRAAAKTPGRRSARSESPSSTSPSARSRKAAPPA. Low complexity-rich tracts occupy residues 211–230 and 238–248; these read SSAP…AAKT and SESPSSTSPSA.

This sequence belongs to the UPRTase family. Mg(2+) serves as cofactor.

The catalysed reaction is UMP + diphosphate = 5-phospho-alpha-D-ribose 1-diphosphate + uracil. It functions in the pathway pyrimidine metabolism; UMP biosynthesis via salvage pathway; UMP from uracil: step 1/1. Allosterically activated by GTP. In terms of biological role, catalyzes the conversion of uracil and 5-phospho-alpha-D-ribose 1-diphosphate (PRPP) to UMP and diphosphate. The protein is Uracil phosphoribosyltransferase of Mycolicibacterium paratuberculosis (strain ATCC BAA-968 / K-10) (Mycobacterium paratuberculosis).